A 222-amino-acid chain; its full sequence is MAEKPKLHYSNIRGRMESIRWLLAAAGVEFEEKFIKSAEDLDKLRNDGYLMFQQVPMVEIDGMKLVQTRAILNYIASKYNLYGKDIKEKALIDMYIEGIADLGEMILLLPFSQPEEQDAKLALIQEKTKNRYFPAFEKVLKSHGQDYLVGNKLSRADIHLVELLYYVEELDSSLISSFPLLKALKTRISNLPTVKKFLQPGSPRKPPMDEKSLEESRKIFRF.

Ala-2 carries the post-translational modification N-acetylalanine. Positions 3–83 constitute a GST N-terminal domain; that stretch reads EKPKLHYSNI…YIASKYNLYG (81 aa). Lys-4 is modified (N6-succinyllysine). Residues Tyr-9, Arg-45, 54-55, and 67-68 each bind glutathione; these read QV and QT. Residues 85-207 enclose the GST C-terminal domain; the sequence is DIKEKALIDM…LQPGSPRKPP (123 aa). The segment at 199–222 is disordered; the sequence is QPGSPRKPPMDEKSLEESRKIFRF. Over residues 206-222 the composition is skewed to basic and acidic residues; sequence PPMDEKSLEESRKIFRF.

Belongs to the GST superfamily. Alpha family. As to quaternary structure, homodimer or heterodimer of GSTA1 and GSTA2. Liver.

The protein resides in the cytoplasm. The enzyme catalyses RX + glutathione = an S-substituted glutathione + a halide anion + H(+). In terms of biological role, catalyzes the conjugation of glutathione to a large variety of electrophilic compounds. The protein is Glutathione S-transferase A2 (GSTA2) of Homo sapiens (Human).